The chain runs to 502 residues: Mannitol 2-dehydrogenase (502 aa).

Residue 37–48 participates in NAD(+) binding; that stretch reads IVHIGVGGFHRA.

The protein belongs to the mannitol dehydrogenase family. As to quaternary structure, monomer.

It carries out the reaction D-mannitol + NAD(+) = D-fructose + NADH + H(+). Functionally, catalyzes the NAD(H)-dependent interconversion of D-fructose and D-mannitol in the mannitol metabolic pathway. The chain is Mannitol 2-dehydrogenase from Neosartorya fischeri (strain ATCC 1020 / DSM 3700 / CBS 544.65 / FGSC A1164 / JCM 1740 / NRRL 181 / WB 181) (Aspergillus fischerianus).